A 507-amino-acid polypeptide reads, in one-letter code: Glycosyltransferase family 92 protein C33H5.2 (507 aa).

Residues Val-6–Tyr-26 form a helical membrane-spanning segment. One can recognise a GT92 domain in the interval Arg-155–Asp-444.

Belongs to the glycosyltransferase 92 family.

The protein localises to the membrane. The sequence is that of Glycosyltransferase family 92 protein C33H5.2 from Caenorhabditis elegans.